A 267-amino-acid chain; its full sequence is Protein PERCC1 (267 aa).

Disordered regions lie at residues 19–88 (HHPF…QLLR), 142–163 (SLED…RPGL), and 247–267 (ACPE…PAEA). Residues 28-50 (EPPETSEEEEEEEEEEEEEEGEG) are compositionally biased toward acidic residues. Residues 74 to 83 (PEGPGSPETP) show a composition bias toward low complexity.

Plays a critical role in intestinal function. Acts by promoting the development of enteroendocrine cells (EECs) of the gastrointestinal tract and pancreas. It is thereby required for normal enteroendocrine peptide hormone secretion. The sequence is that of Protein PERCC1 from Homo sapiens (Human).